The following is a 178-amino-acid chain: ATP synthase subunit b (178 aa).

The helical transmembrane segment at 11–31 (IIPEPVEIVVGLVAFLLLLFV) threads the bilayer.

The protein belongs to the ATPase B chain family. F-type ATPases have 2 components, F(1) - the catalytic core - and F(0) - the membrane proton channel. F(1) has five subunits: alpha(3), beta(3), gamma(1), delta(1), epsilon(1). F(0) has three main subunits: a(1), b(2) and c(10-14). The alpha and beta chains form an alternating ring which encloses part of the gamma chain. F(1) is attached to F(0) by a central stalk formed by the gamma and epsilon chains, while a peripheral stalk is formed by the delta and b chains.

Its subcellular location is the cell membrane. Its function is as follows. F(1)F(0) ATP synthase produces ATP from ADP in the presence of a proton or sodium gradient. F-type ATPases consist of two structural domains, F(1) containing the extramembraneous catalytic core and F(0) containing the membrane proton channel, linked together by a central stalk and a peripheral stalk. During catalysis, ATP synthesis in the catalytic domain of F(1) is coupled via a rotary mechanism of the central stalk subunits to proton translocation. Component of the F(0) channel, it forms part of the peripheral stalk, linking F(1) to F(0). This chain is ATP synthase subunit b, found in Saccharopolyspora erythraea (strain ATCC 11635 / DSM 40517 / JCM 4748 / NBRC 13426 / NCIMB 8594 / NRRL 2338).